The following is a 284-amino-acid chain: Pantothenate synthetase (284 aa).

30–37 (MGNLHDGH) lines the ATP pocket. His-37 acts as the Proton donor in catalysis. Gln-61 contributes to the (R)-pantoate binding site. Residue Gln-61 coordinates beta-alanine. 149–152 (GEKD) provides a ligand contact to ATP. (R)-pantoate is bound at residue Gln-155. Residues Val-178 and 186–189 (LSSR) each bind ATP.

The protein belongs to the pantothenate synthetase family. In terms of assembly, homodimer.

Its subcellular location is the cytoplasm. It carries out the reaction (R)-pantoate + beta-alanine + ATP = (R)-pantothenate + AMP + diphosphate + H(+). It participates in cofactor biosynthesis; (R)-pantothenate biosynthesis; (R)-pantothenate from (R)-pantoate and beta-alanine: step 1/1. Functionally, catalyzes the condensation of pantoate with beta-alanine in an ATP-dependent reaction via a pantoyl-adenylate intermediate. The chain is Pantothenate synthetase from Cronobacter sakazakii (strain ATCC BAA-894) (Enterobacter sakazakii).